Reading from the N-terminus, the 33-residue chain is Trypsin inhibitor 1 (33 aa).

Disulfide bonds link C1–C17, C8–C21, and C16–C32.

As to expression, expressed in leaves and fruit flesh (at protein level).

Inhibits trypsin (IC(50)=471 nM). In Beta vulgaris subsp. vulgaris (Beet), this protein is Trypsin inhibitor 1.